The primary structure comprises 158 residues: ATP synthase subunit b', chloroplastic (158 aa).

The helical transmembrane segment at 21–41 threads the bilayer; that stretch reads GTLPLMALQFLILMLLLNTIF.

Belongs to the ATPase B chain family. In terms of assembly, F-type ATPases have 2 components, F(1) - the catalytic core - and F(0) - the membrane proton channel. F(1) has five subunits: alpha(3), beta(3), gamma(1), delta(1), epsilon(1). F(0) has four main subunits: a(1), b(1), b'(1) and c(10-14). The alpha and beta chains form an alternating ring which encloses part of the gamma chain. F(1) is attached to F(0) by a central stalk formed by the gamma and epsilon chains, while a peripheral stalk is formed by the delta, b and b' chains.

The protein resides in the plastid. It is found in the chloroplast thylakoid membrane. Its function is as follows. F(1)F(0) ATP synthase produces ATP from ADP in the presence of a proton or sodium gradient. F-type ATPases consist of two structural domains, F(1) containing the extramembraneous catalytic core and F(0) containing the membrane proton channel, linked together by a central stalk and a peripheral stalk. During catalysis, ATP synthesis in the catalytic domain of F(1) is coupled via a rotary mechanism of the central stalk subunits to proton translocation. In terms of biological role, component of the F(0) channel, it forms part of the peripheral stalk, linking F(1) to F(0). The b'-subunit is a diverged and duplicated form of b found in plants and photosynthetic bacteria. The polypeptide is ATP synthase subunit b', chloroplastic (Porphyra purpurea (Red seaweed)).